We begin with the raw amino-acid sequence, 157 residues long: Succinate dehydrogenase assembly factor 2-A, mitochondrial (157 aa).

The transit peptide at 1–21 (MLRQVLSSTSVRRLLVSPTRC) directs the protein to the mitochondrion.

It belongs to the SDHAF2 family. In terms of assembly, interacts with the flavoprotein subunit within the SDH catalytic dimer.

The protein resides in the mitochondrion matrix. Its function is as follows. Plays an essential role in the assembly of succinate dehydrogenase (SDH), an enzyme complex (also referred to as respiratory complex II) that is a component of both the tricarboxylic acid (TCA) cycle and the mitochondrial electron transport chain, and which couples the oxidation of succinate to fumarate with the reduction of ubiquinone (coenzyme Q) to ubiquinol. Required for flavinylation (covalent attachment of FAD) of the flavoprotein subunit of the SDH catalytic dimer. The sequence is that of Succinate dehydrogenase assembly factor 2-A, mitochondrial from Drosophila mojavensis (Fruit fly).